The primary structure comprises 298 residues: Estradiol 17-beta-dehydrogenase 11 (298 aa).

The signal sequence occupies residues 1–21 (MKYLLDLILLLPLLIVFCIES). NADP(+) is bound at residue 40 to 64 (LITGAGHGIGRLTAYEFAKLNTKLV). Position 172 (Ser-172) interacts with substrate. Residue Tyr-185 is the Proton acceptor of the active site.

This sequence belongs to the short-chain dehydrogenases/reductases (SDR) family. 17-beta-HSD 3 subfamily.

The protein resides in the endoplasmic reticulum. The protein localises to the lipid droplet. It carries out the reaction 17beta-estradiol + NAD(+) = estrone + NADH + H(+). The catalysed reaction is 17beta-estradiol + NADP(+) = estrone + NADPH + H(+). Its function is as follows. Can convert androstan-3-alpha,17-beta-diol (3-alpha-diol) to androsterone in vitro, suggesting that it may participate in androgen metabolism during steroidogenesis. May act by metabolizing compounds that stimulate steroid synthesis and/or by generating metabolites that inhibit it. Has no activity toward DHEA (dehydroepiandrosterone), or A-dione (4-androste-3,17-dione), and only a slight activity toward testosterone to A-dione. This chain is Estradiol 17-beta-dehydrogenase 11 (Hsd17b11), found in Rattus norvegicus (Rat).